Here is a 357-residue protein sequence, read N- to C-terminus: Vomeronasal type-1 receptor 5 (357 aa).

Topologically, residues 1–3 (MLK) are extracellular. A helical membrane pass occupies residues 4 to 24 (LVIIENMAEIMLFSLDLLLFS). Residues 25-52 (TDILCFNFPSKMIKLPGFITIQIFFYPQ) lie on the Cytoplasmic side of the membrane. The chain crosses the membrane as a helical span at residues 53–73 (ASFGISANTILLLFHIFTFVF). Residues 74–81 (SHRSKSID) lie on the Extracellular side of the membrane. A helical transmembrane segment spans residues 82–102 (MIISHLSLIHILLLFTQAILV). Topologically, residues 103–130 (SLDFFGSQNTQDDLRYKVIVFLNKVMRG) are cytoplasmic. A helical membrane pass occupies residues 131–151 (LSICTPCLLSVLQAIISPSIF). Over 152–163 (SLAKLKHPSASH) the chain is Extracellular. A helical transmembrane segment spans residues 164–184 (ILGFFLFSWVLNMFIGVIFCC). The Cytoplasmic segment spans residues 185 to 269 (TLRLPPVKRG…RVSPVKRASQ (85 aa)). A helical transmembrane segment spans residues 270 to 290 (AILLLVSFVFTYWVDFTFSFS). The Extracellular portion of the chain corresponds to 291-300 (GGVTWINDSL). Asn297 carries an N-linked (GlcNAc...) asparagine glycan. A helical membrane pass occupies residues 301–321 (LVWLQVIVANSYAAISPLMLI). The Cytoplasmic portion of the chain corresponds to 322-357 (YADNQIFKTLQMLWFKYLSPPKLMLKFNRQCGSTKK).

This sequence belongs to the G-protein coupled receptor 1 family.

The protein resides in the cell membrane. Its function is as follows. Putative pheromone receptor. This Homo sapiens (Human) protein is Vomeronasal type-1 receptor 5 (VN1R5).